A 265-amino-acid chain; its full sequence is Putative Tubby-like protein 4 (265 aa).

In terms of domain architecture, F-box spans 1 to 44; it reads MPPELLRDVLMRIERSEDTWPSRKNVVSCVGVCKNWRQIFKEIV. Residues 228–250 form the FBD domain; sequence SYELKLALYFAKNSAILKKFVLR.

The protein belongs to the TUB family.

The polypeptide is Putative Tubby-like protein 4 (Arabidopsis thaliana (Mouse-ear cress)).